A 179-amino-acid polypeptide reads, in one-letter code: Protein GrpE (179 aa).

The segment at 1–23 (MSEEIKEQNVQDAQNENLAPDSV) is disordered.

Belongs to the GrpE family. Homodimer.

The protein resides in the cytoplasm. Its function is as follows. Participates actively in the response to hyperosmotic and heat shock by preventing the aggregation of stress-denatured proteins, in association with DnaK and GrpE. It is the nucleotide exchange factor for DnaK and may function as a thermosensor. Unfolded proteins bind initially to DnaJ; upon interaction with the DnaJ-bound protein, DnaK hydrolyzes its bound ATP, resulting in the formation of a stable complex. GrpE releases ADP from DnaK; ATP binding to DnaK triggers the release of the substrate protein, thus completing the reaction cycle. Several rounds of ATP-dependent interactions between DnaJ, DnaK and GrpE are required for fully efficient folding. This Campylobacter curvus (strain 525.92) protein is Protein GrpE.